Here is a 130-residue protein sequence, read N- to C-terminus: Small ribosomal subunit protein uS9 (130 aa).

It belongs to the universal ribosomal protein uS9 family.

This Clostridioides difficile (strain 630) (Peptoclostridium difficile) protein is Small ribosomal subunit protein uS9.